A 536-amino-acid chain; its full sequence is MLSRIEQELAQLGITNVKEIVRNPSYEQLFEEEMKPELEGFEKGRLTTSGAVAVDTGIFTGRSPKDKYIVYDETSKDNVWWTSDAVKNDNKPMNQATWQSLKELVTHQLSNKRLFVVDAFCGANKDSRVAVRIVTEVAWQAHFVKNMFVRPSEEELLNFVPDFVVMNGSKVTNPNWKEQGLNSENFVAFNLTEKIQLIGGTWYGGEMKKGLFSLMNYWLPLKGIASMHCSANVGAKGDVAVFFGLSGTGKTTLSTDPKRKLIGDDEHGWDDDGVFNYEGGCYAKTINLSEENEPDIYRAIRRDALLENVVVREDGSVDFADGSKTENTRVSYPIHHIDNIVEPVSKAGHAKKVIFLTADAFGVLPPVSKLTPEQTKYYFLSGFTAKLAGTERGITEPTPTFSACFGAAFLSLHPTKYAEVLVKRMEEAGSQAYLVNTGWNGSGKRISIKDTRGIIDAILDGSIEKAETKELPIFNLAIPTALPNVDPAILDPRDTYADKAQWQTKAEDLAGRFVKNFEKYTTNDEGKALVAAGPKL.

Residues Arg62, Tyr203, and Lys209 each coordinate substrate. ATP is bound by residues Lys209, His228, and 244-252 (GLSGTGKTT). Lys209 and His228 together coordinate Mn(2+). Asp265 lines the Mn(2+) pocket. ATP contacts are provided by residues Glu293, Arg329, 445-446 (RI), and Thr451. Arg329 is a binding site for substrate.

Belongs to the phosphoenolpyruvate carboxykinase (ATP) family. As to quaternary structure, monomer. It depends on Mn(2+) as a cofactor.

The protein localises to the cytoplasm. It carries out the reaction oxaloacetate + ATP = phosphoenolpyruvate + ADP + CO2. It participates in carbohydrate biosynthesis; gluconeogenesis. Functionally, involved in the gluconeogenesis. Catalyzes the conversion of oxaloacetate (OAA) to phosphoenolpyruvate (PEP) through direct phosphoryl transfer between the nucleoside triphosphate and OAA. This Actinobacillus pleuropneumoniae serotype 7 (strain AP76) protein is Phosphoenolpyruvate carboxykinase (ATP).